The chain runs to 171 residues: MAPQTKRAAETPKLGVQKAAVIAAAFLSAITAGAMANISMISVPVFMDTNTNPNHMIAQWSRTYHYGHIILPGICVGTCGLYAFSALRSNKNWRRYALAGITTLSLVPFTWVFMTPTNNTLFALEAAGNVSDLGYVQQLVVKWTWLHATRSMFPLIGAILGFTGIMADLER.

Transmembrane regions (helical) follow at residues 21-41 (VIAA…ISMI), 67-87 (GHII…FSAL), and 96-116 (YALA…FMTP). Asn-118 and Asn-129 each carry an N-linked (GlcNAc...) asparagine glycan. A helical membrane pass occupies residues 145 to 165 (WLHATRSMFPLIGAILGFTGI).

It belongs to the anthrone oxygenase family.

The protein localises to the membrane. It carries out the reaction emodin anthrone + O2 = emodin + H2O + H(+). It functions in the pathway secondary metabolite biosynthesis. In terms of biological role, anthrone oxygenase; part of the gene cluster that mediates the biosynthesis of the dimeric xanthones cryptosporioptides. The pathway begins with the synthesis of atrochrysone thioester by the polyketide synthase dmx-nrPKS. The atrochrysone carboxyl ACP thioesterase dmxR1 then breaks the thioester bond and releases the atrochrysone carboxylic acid from dmx-nrPKS. Atrochrysone carboxylic acid is decarboxylated by the decarboxylase dmxR15, and oxidized by the anthrone oxygenase dmxR16 to yield emodin. Emodin is then reduced to emodin hydroquinone by the oxidoreductase dmxR7. A-ring reduction by the short chain dehydrogenase dmxR18, dehydration by the scytalone dehydratase-like protein dmxR17 and probable spontaneous re-oxidation, results in overall deoxygenation to chrysophanol. Baeyer-Villiger oxidation by the Baeyer-Villiger monooxygenase (BVMO) dmxR6 then yields monodictylactone in equilibrium with monodictyphenone. In the case of the cryptosporioptides biosynthesis, monodictylactone is reduced at C-12 to an alcohol (by the short chain dehydrogenases dmxR12 or dmxR8) and hydroxylated at C-5 by dmxR9, yielding the electron-rich aromatic which could eliminate H(2)O to form the ortho-quinonemethide, followed by tautomerisation to paraquinone and complete the formal reduction to produce the 10-methylgroup. Conjugate addition of C-4a-OH to the resulting paraquinone by the monooxygenase dmxR10 then gives cyclohexadienone, which is then reduced at C-5 by the short chain dehydrogenase dmxR3 to give the dihydroxanthone. The 6,7-epoxide in the cryptosporioptides could be introduced by the cytochrome P450 monooxygenase dmxL3. The highly reducing PKS dmxL2 manufactures butyrate, which is further carboxylated by dmxL1 to form ethylmalonate. It is not yet clear whether the carboxylation occurs while the butyrate is attached to the ACP of dmxL2, but this unusual fungal metabolite could then be esterified to O-5 by the O-acetyltransferase dmxR13. Finally, dimerization performed by dmxR5 gives the observed dimers cryptosporioptides A, B and C as the final products of the pathway. The polypeptide is Anthrone oxygenase dmxR16 (Cryptosporiopsis sp. (strain 8999)).